The sequence spans 68 residues: UPF0253 protein AHA_2115 (68 aa).

The protein belongs to the UPF0253 family.

The protein is UPF0253 protein AHA_2115 of Aeromonas hydrophila subsp. hydrophila (strain ATCC 7966 / DSM 30187 / BCRC 13018 / CCUG 14551 / JCM 1027 / KCTC 2358 / NCIMB 9240 / NCTC 8049).